The following is a 429-amino-acid chain: Isocitrate dehydrogenase [NADP] (429 aa).

Thr-108 contacts NADP(+). 5 residues coordinate D-threo-isocitrate: Ser-117, Asn-119, Arg-123, Arg-133, and Arg-156. Mg(2+) is bound at residue Asp-308. Residues His-340–Tyr-346, Asn-353, Tyr-393, and Arg-397 each bind NADP(+).

It belongs to the isocitrate and isopropylmalate dehydrogenases family. Homodimer. It depends on Mg(2+) as a cofactor. Requires Mn(2+) as cofactor.

The enzyme catalyses D-threo-isocitrate + NADP(+) = 2-oxoglutarate + CO2 + NADPH. Its function is as follows. Catalyzes the oxidative decarboxylation of isocitrate to 2-oxoglutarate and carbon dioxide with the concomitant reduction of NADP(+). This Caldococcus noboribetus protein is Isocitrate dehydrogenase [NADP] (icd).